The sequence spans 144 residues: Complexin-1 (144 aa).

The span at 1-10 shows a compositional bias: gly residues; sequence MVSFLGGGLL. Positions 1–119 are disordered; sequence MVSFLGGGLL…SGFPKNLDDL (119 aa). Basic and acidic residues-rich tracts occupy residues 18–27 and 36–86; these read LEEKEDKKEG and AEAK…EGRL. Residues 29-67 adopt a coiled-coil conformation; that stretch reads EEEDPEIAEAKREAEEKRNEKYRKMEEEREVMRQGIRDK. Positions 103-112 are enriched in polar residues; it reads LQSSAQSSGF. Cysteine methyl ester is present on Cys141. Cys141 carries S-farnesyl cysteine lipidation. Positions 142–144 are cleaved as a propeptide — removed in mature form; that stretch reads NLQ.

This sequence belongs to the complexin/synaphin family. Binds to the SNARE core complex containing SNAP25, synaptobrevin and syntaxin-1. In terms of tissue distribution, expressed in a subset of neurons in the central nervous system, including large serotoninergic Retzius neurons and pressure-sensitive P cells.

It localises to the membrane. In terms of biological role, positively regulates a late step in synaptic vesicle exocytosis. In Hirudo medicinalis (Medicinal leech), this protein is Complexin-1 (cpx1).